Reading from the N-terminus, the 308-residue chain is Neurexophilin-4 (308 aa).

Residues 1-23 (MRLLPEWFLLLFGPWLLRKAVSA) form the signal peptide. The II stretch occupies residues 24-84 (QIPESGRPQY…GALARAGAAG (61 aa)). A compositionally biased stretch (low complexity) spans 40–51 (AAGAGAPGQQLP). A disordered region spans residues 40–59 (AAGAGAPGQQLPEPRSSDGL). N72, N133, N143, and N149 each carry an N-linked (GlcNAc...) asparagine glycan. Residues 85–163 (ALPAQRTKRK…IVPPSKRVEF (79 aa)) are III. Residues 164–224 (GGVWLPGPVP…PLGGALGVPG (61 aa)) form an IV (linker domain) region. A v (Cys-rich) region spans residues 225–308 (AKESRAFNCH…NFQSEHPYFG (84 aa)).

Belongs to the neurexophilin family. May be proteolytically processed at the boundary between the N-terminal non-conserved and the central conserved domain in neuron-like cells. As to expression, expressed in brain, spleen, and testis.

The protein resides in the secreted. In terms of biological role, may be signaling molecules that resemble neuropeptides and that act by binding to alpha-neurexins and possibly other receptors. This chain is Neurexophilin-4 (NXPH4), found in Homo sapiens (Human).